Here is an 87-residue protein sequence, read N- to C-terminus: Down syndrome critical region protein 10 (87 aa).

This is Down syndrome critical region protein 10 (DSCR10) from Pan troglodytes (Chimpanzee).